The sequence spans 338 residues: Phenylalanine--tRNA ligase alpha subunit (338 aa).

Glu-252 is a binding site for Mg(2+).

This sequence belongs to the class-II aminoacyl-tRNA synthetase family. Phe-tRNA synthetase alpha subunit type 1 subfamily. As to quaternary structure, tetramer of two alpha and two beta subunits. The cofactor is Mg(2+).

It localises to the cytoplasm. It carries out the reaction tRNA(Phe) + L-phenylalanine + ATP = L-phenylalanyl-tRNA(Phe) + AMP + diphosphate + H(+). The sequence is that of Phenylalanine--tRNA ligase alpha subunit (pheS) from Aquifex aeolicus (strain VF5).